Consider the following 367-residue polypeptide: Methylthioribose-1-phosphate isomerase (367 aa).

Residue Asp250 is the Proton donor of the active site.

It belongs to the eIF-2B alpha/beta/delta subunits family. MtnA subfamily.

The protein localises to the cytoplasm. The protein resides in the nucleus. The catalysed reaction is 5-(methylsulfanyl)-alpha-D-ribose 1-phosphate = 5-(methylsulfanyl)-D-ribulose 1-phosphate. It functions in the pathway amino-acid biosynthesis; L-methionine biosynthesis via salvage pathway; L-methionine from S-methyl-5-thio-alpha-D-ribose 1-phosphate: step 1/6. Catalyzes the interconversion of methylthioribose-1-phosphate (MTR-1-P) into methylthioribulose-1-phosphate (MTRu-1-P). The chain is Methylthioribose-1-phosphate isomerase (IDI2) from Hordeum vulgare (Barley).